Here is a 968-residue protein sequence, read N- to C-terminus: Isoleucine--tRNA ligase (968 aa).

Residues 68-78 carry the 'HIGH' region motif; that stretch reads PYANGALHMGH. An L-isoleucyl-5'-AMP-binding site is contributed by Glu-584. The short motif at 625 to 629 is the 'KMSKS' region element; sequence KMSKS. Lys-628 provides a ligand contact to ATP. 4 residues coordinate Zn(2+): Cys-938, Cys-941, Cys-958, and Cys-961.

Belongs to the class-I aminoacyl-tRNA synthetase family. IleS type 1 subfamily. In terms of assembly, monomer. The cofactor is Zn(2+).

Its subcellular location is the cytoplasm. It catalyses the reaction tRNA(Ile) + L-isoleucine + ATP = L-isoleucyl-tRNA(Ile) + AMP + diphosphate. Catalyzes the attachment of isoleucine to tRNA(Ile). As IleRS can inadvertently accommodate and process structurally similar amino acids such as valine, to avoid such errors it has two additional distinct tRNA(Ile)-dependent editing activities. One activity is designated as 'pretransfer' editing and involves the hydrolysis of activated Val-AMP. The other activity is designated 'posttransfer' editing and involves deacylation of mischarged Val-tRNA(Ile). The protein is Isoleucine--tRNA ligase of Synechococcus sp. (strain CC9311).